Reading from the N-terminus, the 1357-residue chain is DNA-directed RNA polymerase subunit beta (1357 aa).

Belongs to the RNA polymerase beta chain family. The RNAP catalytic core consists of 2 alpha, 1 beta, 1 beta' and 1 omega subunit. When a sigma factor is associated with the core the holoenzyme is formed, which can initiate transcription.

It carries out the reaction RNA(n) + a ribonucleoside 5'-triphosphate = RNA(n+1) + diphosphate. In terms of biological role, DNA-dependent RNA polymerase catalyzes the transcription of DNA into RNA using the four ribonucleoside triphosphates as substrates. In Pseudomonas putida (strain W619), this protein is DNA-directed RNA polymerase subunit beta.